Reading from the N-terminus, the 378-residue chain is Glutamate 5-kinase (378 aa).

K20 serves as a coordination point for ATP. 3 residues coordinate substrate: S60, D147, and N159. ATP-binding positions include 179-180 and 221-227; these read TD and TGGMATK. One can recognise a PUA domain in the interval 286–364; it reads AGDIVIDAGA…QEIYKVLGYE (79 aa).

Belongs to the glutamate 5-kinase family.

The protein localises to the cytoplasm. The enzyme catalyses L-glutamate + ATP = L-glutamyl 5-phosphate + ADP. It functions in the pathway amino-acid biosynthesis; L-proline biosynthesis; L-glutamate 5-semialdehyde from L-glutamate: step 1/2. Functionally, catalyzes the transfer of a phosphate group to glutamate to form L-glutamate 5-phosphate. In Photobacterium profundum (strain SS9), this protein is Glutamate 5-kinase.